The primary structure comprises 336 residues: Serpentine receptor class alpha-10 (336 aa).

The Extracellular portion of the chain corresponds to 1 to 28 (MGPITANSSKCATEDQMILQTSLLLRIN). A helical membrane pass occupies residues 29-49 (VIIMTIVAIITFILTYKALFI). Topologically, residues 50 to 61 (LKIRPIFHSSTK) are cytoplasmic. Residues 62–82 (ILLYTSLLFVNVHAVIFMVIQ) form a helical membrane-spanning segment. Residues 83 to 107 (NTALIRSFTLSDKPCEIMRTTLECR) lie on the Extracellular side of the membrane. A helical membrane pass occupies residues 108 to 128 (FQNHVLIFGIAGVNFNQFGLT). The Cytoplasmic portion of the chain corresponds to 129 to 148 (VDRLLATIIPQSYSHMGALP). A helical membrane pass occupies residues 149–169 (GVILSVLVVACSIAAPLIIAI). Topologically, residues 170 to 192 (GDPYDDIVPNCFFFPEHSAPRAN) are extracellular. A helical transmembrane segment spans residues 193–213 (IFLVTLSTLVITSIFLNFIII). Residues 214–243 (YANKKLEKGCRTRFYVTQRYQKREALISTR) are Cytoplasmic-facing. The chain crosses the membrane as a helical span at residues 244–264 (IISYIAASQFLGLTLYSTMVL). At 265 to 280 (TLRLHKSMIPISIYHN) the chain is on the extracellular side. The helical transmembrane segment at 281-301 (MVWWAYTVPFAAVSLPALLIY) threads the bilayer. The Cytoplasmic portion of the chain corresponds to 302–336 (RINQVGSNRKRVINRITAKVETQEEHMKSLKELWA).

Belongs to the nematode receptor-like protein sra family. In terms of tissue distribution, expressed in the URX sensory neuron, the ALA interneuron and in additional interneurons, pharyngeal neurons and muscle.

The protein localises to the membrane. The sequence is that of Serpentine receptor class alpha-10 (sra-10) from Caenorhabditis elegans.